Reading from the N-terminus, the 90-residue chain is Small ribosomal subunit protein bS16 (90 aa).

It belongs to the bacterial ribosomal protein bS16 family.

The protein is Small ribosomal subunit protein bS16 of Geobacillus kaustophilus (strain HTA426).